The primary structure comprises 194 residues: Adenylate kinase (194 aa).

8–16 lines the ATP pocket; it reads GIPGVGKST.

Belongs to the archaeal adenylate kinase family. Homotrimer.

The protein resides in the cytoplasm. The enzyme catalyses AMP + ATP = 2 ADP. This is Adenylate kinase (adkA) from Sulfolobus acidocaldarius (strain ATCC 33909 / DSM 639 / JCM 8929 / NBRC 15157 / NCIMB 11770).